We begin with the raw amino-acid sequence, 30 residues long: Hainantoxin F7-28.42 (30 aa).

Expressed by the venom gland.

It is found in the secreted. This Cyriopagopus hainanus (Chinese bird spider) protein is Hainantoxin F7-28.42.